Here is an 832-residue protein sequence, read N- to C-terminus: Vacuolar transmembrane transporter penV (832 aa).

2 consecutive transmembrane segments (helical) span residues 39–59 and 117–137; these read LYTQ…AFCI and FFKF…AIIL. Residues 152–171 are disordered; the sequence is WDNPPGNKTTSPIDGSEKEK. Asn158 is a glycosylation site (N-linked (GlcNAc...) asparagine). The helical transmembrane segment at 178-198 threads the bilayer; sequence YLWIYVLFAYVFSGLAIYMLL. N-linked (GlcNAc...) asparagine glycosylation is present at Asn214. The tract at residues 291–322 is disordered; sequence NDGNALPLTEQQPRDADDERSGLLSGHDNEHV. Residues 302–321 are compositionally biased toward basic and acidic residues; that stretch reads QPRDADDERSGLLSGHDNEH. A run of 9 helical transmembrane segments spans residues 434–454, 483–503, 524–544, 560–582, 587–608, 623–645, 650–672, 687–707, and 713–733; these read FVIG…ASLL, GLPT…YEWL, FFFS…ASGF, TIAL…LLIL, LFPF…FLSA, FSYG…YSVF, LICL…QLLY, MICN…IGVL, and ITRS…SYWF. Residues 754-777 form a disordered region; the sequence is PGGGDISPSPSSTLSPPSGLDRDS. A compositionally biased stretch (low complexity) spans 759–771; it reads ISPSPSSTLSPPS.

It belongs to the CSC1 (TC 1.A.17) family.

It localises to the vacuole membrane. Functionally, vacuolar transmembrane transporter that participates in the first stage of the beta-lactam biosynthesis (the formation of the ACV tripeptide), probably taking part in the supply of amino acids from the vacuolar lumen to the vacuole-anchored ACV synthetase. This is Vacuolar transmembrane transporter penV from Penicillium rubens (strain ATCC 28089 / DSM 1075 / NRRL 1951 / Wisconsin 54-1255) (Penicillium chrysogenum).